Here is a 188-residue protein sequence, read N- to C-terminus: Transmembrane protein 160 (188 aa).

The transit peptide at 1–96 directs the protein to the mitochondrion; it reads MGGGWWWARV…ISFMQSDMGR (96 aa). The segment at 21 to 53 is disordered; that stretch reads SLQPPQRPRSGGARGSFAPGHGPRAGASPPPVS. S48 is modified (phosphoserine). 2 helical membrane-spanning segments follow: residues 102-122 and 135-155; these read FFLL…VGLA and AAAG…AVGL. The tract at residues 168–188 is disordered; it reads PEDDGAASTEGPDEAGRPPPE.

The protein belongs to the TMEM160 family. As to expression, expressed in peripheral sensory neurons of dorsal root ganglia (DRG).

It localises to the mitochondrion inner membrane. This Mus musculus (Mouse) protein is Transmembrane protein 160.